The primary structure comprises 335 residues: Tetraacyldisaccharide 4'-kinase (335 aa).

59-66 (TAGGNGKT) serves as a coordination point for ATP.

Belongs to the LpxK family.

The catalysed reaction is a lipid A disaccharide + ATP = a lipid IVA + ADP + H(+). It participates in glycolipid biosynthesis; lipid IV(A) biosynthesis; lipid IV(A) from (3R)-3-hydroxytetradecanoyl-[acyl-carrier-protein] and UDP-N-acetyl-alpha-D-glucosamine: step 6/6. Transfers the gamma-phosphate of ATP to the 4'-position of a tetraacyldisaccharide 1-phosphate intermediate (termed DS-1-P) to form tetraacyldisaccharide 1,4'-bis-phosphate (lipid IVA). The chain is Tetraacyldisaccharide 4'-kinase from Vibrio campbellii (strain ATCC BAA-1116).